Consider the following 693-residue polypeptide: Adhesion G-protein coupled receptor G1 (693 aa).

Positions methionine 1 to glycine 25 are cleaved as a signal peptide. Arginine 26–arginine 33 provides a ligand contact to heparin. The Extracellular portion of the chain corresponds to arginine 26–histidine 401. 2 disulfides stabilise this stretch: cysteine 35–cysteine 91 and cysteine 121–cysteine 177. N-linked (GlcNAc...) asparagine glycans are attached at residues asparagine 39, asparagine 148, and asparagine 171. Heparin is bound at residue leucine 190–proline 200. Positions aspartate 224–valine 395 constitute a GAIN-B domain. 4 N-linked (GlcNAc...) asparagine glycosylation sites follow: asparagine 234, asparagine 303, asparagine 324, and asparagine 341. 2 disulfide bridges follow: cysteine 346–cysteine 377 and cysteine 366–cysteine 379. A GPS region spans residues cysteine 346 to valine 395. The tract at residues tyrosine 384–alanine 397 is stachel. Residues tyrosine 402–alanine 424 traverse the membrane as a helical segment. Residues tyrosine 425–lysine 437 are Cytoplasmic-facing. Residues proline 438–phenylalanine 460 traverse the membrane as a helical segment. Topologically, residues leucine 461–proline 465 are extracellular. A helical transmembrane segment spans residues valine 466–leucine 495. A disulfide bridge connects residues cysteine 475 and cysteine 562. The Cytoplasmic segment spans residues glutamate 496 to threonine 510. The helical transmembrane segment at tyrosine 511–leucine 533 threads the bilayer. At valine 534 to cysteine 562 the chain is on the extracellular side. The chain crosses the membrane as a helical span at residues tryptophan 563–methionine 588. Residues leucine 589 to histidine 602 are Cytoplasmic-facing. The chain crosses the membrane as a helical span at residues threonine 603–alanine 624. The Extracellular segment spans residues leucine 625–phenylalanine 628. Residues serine 629–isoleucine 654 traverse the membrane as a helical segment. At phenylalanine 655–isoleucine 693 the chain is on the cytoplasmic side. The disordered stretch occupies residues serine 670–isoleucine 693. Low complexity predominate over residues serine 684–isoleucine 693.

Belongs to the G-protein coupled receptor 2 family. LN-TM7 subfamily. In terms of assembly, heterodimer of 2 chains generated by proteolytic processing; the large extracellular N-terminal fragment (ADGRG1 NT) and the membrane-bound C-terminal fragment (ADGRG1-CT) predominantly remain associated and non-covalently linked. ADGRG1 NT self-associates in a trans-trans manner; the homophilic interaction enhances receptor signaling. Interacts with TGM2. Interacts with heparin; leading to the reduction of ADGRG1 shedding. Interacts with COL3A1. Part of a GPCR-tetraspanin complex at least consisting of ADGRG1, CD81, eventually CD9, and GNA11 in which CD81 is enhancing the association of ADGRG1 with GNA11. Autoproteolytically cleaved into 2 fragments; the large extracellular N-terminal fragment (ADGRG1 NT) and the membrane-bound C-terminal fragment (ADGRG1 CT) predominantly remain associated and non-covalently linked. Shedding to yield the secreted ADGRG1 N-terminal fragment seems to involve metalloprotease(s). In terms of processing, N-glycosylated. Contains sialic acid residues. Post-translationally, ubiquitinated. Undergoes polyubiquitination upon activation. In terms of tissue distribution, widely distributed with highest levels found in thyroid gland, brain and heart. Expressed in a great number of tumor cells. Expression is down-regulated in different tumors from highly metastatic cells.

It localises to the cell membrane. It is found in the secreted. The protein localises to the membrane raft. Forms a heterodimer of 2 chains generated by proteolytic processing that remain associated through non-covalent interactions mediated by the GAIN-B domain. In the inactivated receptor, the Stachel sequence (also named stalk) is embedded in the GAIN-B domain, where it adopts a beta-strand conformation. On activation, the Stachel moves into the 7 transmembrane region and adopts a twisted hook-shaped configuration that forms contacts within the receptor, leading to coupling of a G-alpha protein, which activates signaling. The cleaved GAIN-B and N-terminal domains can then dissociate from the rest of the receptor. Functionally, adhesion G-protein coupled receptor (aGPCR) for steroid hormone 17alpha-hydroxypregnenolone (17-OH), which is involved in cell adhesion and cell-cell interactions. Ligand binding causes a conformation change that triggers signaling via guanine nucleotide-binding proteins (G proteins) and modulates the activity of downstream effectors, such as RhoA pathway. ADGRG1 is coupled to G(12) and/or G(13) G proteins (GNA12 and GNA13, respectively) and mediates the activation Rho small GTPases. Acts as a potent suppressor of ferroptosis: binding to 17-OH-binding initiates signaling that down-regulates CD36 and alleviates ferroptosis-induced liver injury. Ligand-binding also induces cell adhesion activity via association with proteins such as collagen III/COL3A1 and TGM2. Mediates cell matrix adhesion in developing neurons and hematopoietic stem cells. Involved in cortical development, specifically in maintenance of the pial basement membrane integrity and in cortical lamination: association with COL3A1 in the developing brain inhibits neuronal migration via activation of the RhoA pathway. Together with TGM2, acts as a regulator of myelination and myelin repair in oligodendrocyte precursor cells. Acts as a hemostatic sensor of shear force: G protein-coupled receptor signaling is activated in response to shear force in platelets, promoting G(13) G protein signaling, and platelet shape change and aggregation in a COL3A1-dependent manner. Acts as an inhibitor of VEGFA production thereby inhibiting angiogenesis through a signaling pathway mediated by PRKCA. Plays a role in the maintenance of hematopoietic stem cells in bone marrow niche. Plays an essential role in testis development. In Homo sapiens (Human), this protein is Adhesion G-protein coupled receptor G1.